The chain runs to 693 residues: eEF1A lysine and N-terminal methyltransferase (693 aa).

Belongs to the methyltransferase superfamily.

The enzyme catalyses L-lysyl-[protein] + S-adenosyl-L-methionine = N(6)-methyl-L-lysyl-[protein] + S-adenosyl-L-homocysteine + H(+). The catalysed reaction is N(6)-methyl-L-lysyl-[protein] + S-adenosyl-L-methionine = N(6),N(6)-dimethyl-L-lysyl-[protein] + S-adenosyl-L-homocysteine + H(+). It catalyses the reaction N-terminal glycyl-L-lysyl-L-glutamyl-[protein] + 3 S-adenosyl-L-methionine = N-terminal N,N,N-trimethyl-glycyl-L-lysyl-L-glutamyl-[protein] + 3 S-adenosyl-L-homocysteine + 3 H(+). Its function is as follows. Dual methyltransferase that catalyzes methylation of elongation factor 1-alpha (eef1a1 and eef1a2) at two different positions, and is therefore involved in the regulation of mRNA translation. Via its C-terminus, methylates the N-terminus of eef1a1 and eef1a2. Via its N-terminus dimethylates lysine residues of eef1a1 and eef1a2. The sequence is that of eEF1A lysine and N-terminal methyltransferase (mettl13) from Xenopus laevis (African clawed frog).